Reading from the N-terminus, the 149-residue chain is Small ribosomal subunit protein eS19 (149 aa).

Belongs to the eukaryotic ribosomal protein eS19 family.

This is Small ribosomal subunit protein eS19 (RPS19) from Mya arenaria (Soft-shell clam).